The sequence spans 122 residues: Aspartate 1-decarboxylase (122 aa).

S25 functions as the Schiff-base intermediate with substrate; via pyruvic acid in the catalytic mechanism. S25 carries the post-translational modification Pyruvic acid (Ser). Residue T57 coordinates substrate. Catalysis depends on Y58, which acts as the Proton donor. 73 to 75 (GAA) serves as a coordination point for substrate.

It belongs to the PanD family. Heterooctamer of four alpha and four beta subunits. Pyruvate is required as a cofactor. In terms of processing, is synthesized initially as an inactive proenzyme, which is activated by self-cleavage at a specific serine bond to produce a beta-subunit with a hydroxyl group at its C-terminus and an alpha-subunit with a pyruvoyl group at its N-terminus.

It localises to the cytoplasm. The enzyme catalyses L-aspartate + H(+) = beta-alanine + CO2. It participates in cofactor biosynthesis; (R)-pantothenate biosynthesis; beta-alanine from L-aspartate: step 1/1. Its function is as follows. Catalyzes the pyruvoyl-dependent decarboxylation of aspartate to produce beta-alanine. The protein is Aspartate 1-decarboxylase of Bordetella pertussis (strain Tohama I / ATCC BAA-589 / NCTC 13251).